The sequence spans 667 residues: Protein OS-9 (667 aa).

The N-terminal stretch at 1-25 is a signal peptide; that stretch reads MAAETLLSSLLGLLLLGLLLPASLT. One can recognise an MRH domain in the interval 108–230; sequence APCLLKTKDW…TIRTPRLCPH (123 aa). Cysteine 110 and cysteine 123 are disulfide-bonded. A mannooligosaccharide derivative-binding residues include tryptophan 117, tryptophan 118, and glutamine 130. The N-linked (GlcNAc...) asparagine glycan is linked to asparagine 177. 2 disulfides stabilise this stretch: cysteine 181–cysteine 216 and cysteine 196–cysteine 228. The a mannooligosaccharide derivative site is built by aspartate 182, arginine 188, glutamate 212, and tyrosine 218. 5 disordered regions span residues 284 to 355, 372 to 452, 464 to 483, 504 to 540, and 633 to 667; these read WSET…NNVQ, LKGG…RDRL, LENI…LKKE, LEEK…PEHR, and AQKE…EFDF. Composition is skewed to basic and acidic residues over residues 302 to 311 and 396 to 412; these read TKDDSKDSDF and PQRE…RQRE. Acidic residues predominate over residues 413–429; that stretch reads MEEEEDEDEDEDEDEDE. A compositionally biased stretch (basic and acidic residues) spans 430 to 452; it reads RQLLGEFEKELEGILLPSDRDRL. The segment covering 504–513 has biased composition (basic and acidic residues); it reads LEEKQSPELV. Over residues 514–523 the composition is skewed to basic residues; it reads KKHKKKRVVP. The span at 633 to 647 shows a compositional bias: basic and acidic residues; sequence AQKERQRQKELESNY.

Belongs to the OS-9 family. Component of the HRD1 complex, which comprises at least SYNV1/HRD1, DERL1/2, FAM8A1, HERPUD1/HERP, OS9, SEL1L and UBE2J1. FAM8A1 is stabilized by interaction with SYNV1, which prevents its proteasomal degradation. OS9 and UBE2J1 recruitment to the complex may be mediated by SEL1L. Through this complex, may interact with ERLEC1 and HSPA5. Interacts (via C-terminus) with CPNE6 (via second C2 domain); this interaction occurs in a calcium-dependent manner in vitro. Interacts with CREB3. In terms of processing, intramolecular disulfide bonds. Post-translationally, isoform 1 and isoform 2 are N-glycosylated. In terms of tissue distribution, ubiquitously expressed. Found as well in all tumor cell lines analyzed, amplified in sarcomas. Highly expressed in osteosarcoma SJSA-1 and rhabdomyosarcoma Rh30 cell lines. As to expression, isoform 2 is the major isoform detected in all cell types examined.

It is found in the endoplasmic reticulum lumen. Its function is as follows. Lectin component of the HRD1 complex, which functions in endoplasmic reticulum (ER) quality control and ER-associated degradation (ERAD). Specifically recognizes and binds improperly folded glycoproteins as well as hyperglycosylated proteins, retain them in the ER, and transfers them to the ubiquitination machinery and promote their degradation. Possible targets include TRPV4 as well as hyperglycosylated HSP90B1. The sequence is that of Protein OS-9 (OS9) from Homo sapiens (Human).